A 697-amino-acid polypeptide reads, in one-letter code: Elongation factor G (697 aa).

One can recognise a tr-type G domain in the interval 8–282; it reads ENTRNIGIMA…AIVDYMPSPV (275 aa). GTP contacts are provided by residues 17–24, 81–85, and 135–138; these read AHIDAGKT, DTPGH, and NKMD.

It belongs to the TRAFAC class translation factor GTPase superfamily. Classic translation factor GTPase family. EF-G/EF-2 subfamily.

Its subcellular location is the cytoplasm. In terms of biological role, catalyzes the GTP-dependent ribosomal translocation step during translation elongation. During this step, the ribosome changes from the pre-translocational (PRE) to the post-translocational (POST) state as the newly formed A-site-bound peptidyl-tRNA and P-site-bound deacylated tRNA move to the P and E sites, respectively. Catalyzes the coordinated movement of the two tRNA molecules, the mRNA and conformational changes in the ribosome. In Acetivibrio thermocellus (strain ATCC 27405 / DSM 1237 / JCM 9322 / NBRC 103400 / NCIMB 10682 / NRRL B-4536 / VPI 7372) (Clostridium thermocellum), this protein is Elongation factor G.